The primary structure comprises 416 residues: Exodeoxyribonuclease 7 large subunit (416 aa).

The protein belongs to the XseA family. In terms of assembly, heterooligomer composed of large and small subunits.

Its subcellular location is the cytoplasm. The catalysed reaction is Exonucleolytic cleavage in either 5'- to 3'- or 3'- to 5'-direction to yield nucleoside 5'-phosphates.. Bidirectionally degrades single-stranded DNA into large acid-insoluble oligonucleotides, which are then degraded further into small acid-soluble oligonucleotides. The sequence is that of Exodeoxyribonuclease 7 large subunit from Nitratiruptor sp. (strain SB155-2).